Reading from the N-terminus, the 304-residue chain is Eukaryotic translation initiation factor 2 subunit alpha (304 aa).

The region spanning aspartate 17–arginine 88 is the S1 motif domain. The residue at position 52 (serine 52) is a Phosphoserine; by GCN2. Residues leucine 283–glutamate 304 form a disordered region. A compositionally biased stretch (basic and acidic residues) spans glutamate 284 to aspartate 293. A phosphoserine mark is found at serine 292 and serine 294. The segment covering serine 294–glutamate 304 has biased composition (acidic residues).

It belongs to the eIF-2-alpha family. In terms of assembly, eukaryotic translation initiation factor 2 eIF2 is a heterotrimeric complex composed of an alpha, a beta and a gamma subunit. The factors eIF-1, eIF-2, eIF-3, TIF5/eIF-5 and methionyl-tRNAi form a multifactor complex (MFC) that may bind to the 40S ribosome. Interacts with CDC123; the interaction is direct. Interacts with GCD1. Phosphorylated; phosphorylation on Ser-52 by the GCN2 protein kinase occurs in response to low amino acid, carbon, or purine availability. Phosphorylation inhibits the guanine nucleotide exchange factor activity of the eIF2B complex.

The protein localises to the cytoplasm. It localises to the cytosol. Functionally, eIF-2 functions in the early steps of protein synthesis by forming a ternary complex with GTP and initiator tRNA. This complex binds to a 40S ribosomal subunit, followed by mRNA binding to form a 43S pre-initiation complex. Junction of the 60S ribosomal subunit to form the 80S initiation complex is preceded by hydrolysis of the GTP bound to eIF-2 and release of an eIF-2-GDP binary complex. In order for eIF-2 to recycle and catalyze another round of initiation, the GDP bound to eIF-2 must exchange with GTP by way of a reaction catalyzed by eIF2B. The sequence is that of Eukaryotic translation initiation factor 2 subunit alpha from Saccharomyces cerevisiae (strain ATCC 204508 / S288c) (Baker's yeast).